Consider the following 208-residue polypeptide: Uracil phosphoribosyltransferase (208 aa).

5-phospho-alpha-D-ribose 1-diphosphate is bound by residues arginine 78, arginine 103, and 130–138; that span reads DPMLATGGS. Residues isoleucine 193 and 198 to 200 contribute to the uracil site; that span reads GDA. Aspartate 199 provides a ligand contact to 5-phospho-alpha-D-ribose 1-diphosphate.

It belongs to the UPRTase family. Mg(2+) serves as cofactor.

It carries out the reaction UMP + diphosphate = 5-phospho-alpha-D-ribose 1-diphosphate + uracil. It functions in the pathway pyrimidine metabolism; UMP biosynthesis via salvage pathway; UMP from uracil: step 1/1. With respect to regulation, allosterically activated by GTP. In terms of biological role, catalyzes the conversion of uracil and 5-phospho-alpha-D-ribose 1-diphosphate (PRPP) to UMP and diphosphate. This chain is Uracil phosphoribosyltransferase, found in Photorhabdus laumondii subsp. laumondii (strain DSM 15139 / CIP 105565 / TT01) (Photorhabdus luminescens subsp. laumondii).